The sequence spans 407 residues: 4-hydroxy-3-methylbut-2-en-1-yl diphosphate synthase (ferredoxin) (407 aa).

[4Fe-4S] cluster-binding residues include cysteine 316, cysteine 319, cysteine 350, and glutamate 357.

It belongs to the IspG family. Requires [4Fe-4S] cluster as cofactor.

It carries out the reaction (2E)-4-hydroxy-3-methylbut-2-enyl diphosphate + 2 oxidized [2Fe-2S]-[ferredoxin] + H2O = 2-C-methyl-D-erythritol 2,4-cyclic diphosphate + 2 reduced [2Fe-2S]-[ferredoxin] + H(+). It functions in the pathway isoprenoid biosynthesis; isopentenyl diphosphate biosynthesis via DXP pathway; isopentenyl diphosphate from 1-deoxy-D-xylulose 5-phosphate: step 5/6. In terms of biological role, converts 2C-methyl-D-erythritol 2,4-cyclodiphosphate (ME-2,4cPP) into 1-hydroxy-2-methyl-2-(E)-butenyl 4-diphosphate. The protein is 4-hydroxy-3-methylbut-2-en-1-yl diphosphate synthase (ferredoxin) of Cyanothece sp. (strain PCC 7425 / ATCC 29141).